The chain runs to 1002 residues: Mannan endo-1,4-beta-mannosidase (1002 aa).

The signal sequence occupies residues 1-28 (MKTTVTKLLATVAAASTIFGMSTLPAFA). The GH26 domain maps to 49–396 (AETRALFDKL…ADSNKNLMAS (348 aa)). A substrate-binding site is contributed by His-144. Glu-205 (proton donor) is an active-site residue. Residues Trp-210 and Tyr-278 each contribute to the substrate site. Glu-316 acts as the Nucleophile in catalysis. Lys-384 lines the substrate pocket. 2 CBM11 domains span residues 523–703 (VDNV…GKRD) and 717–897 (AKAQ…NEQT). Disordered regions lie at residues 702–722 (RDAYAPNTNPTPGNTAKAQSV) and 888–969 (PAEN…LSRT). A compositionally biased stretch (polar residues) spans 707 to 719 (PNTNPTPGNTAKA). Composition is skewed to basic and acidic residues over residues 897-913 (TPKDESKTEVKADKEQE) and 952-966 (PDTKEPADNTGKDGL). The short motif at 966-970 (LSRTG) is the LPXTG sorting signal element. Thr-969 is modified (pentaglycyl murein peptidoglycan amidated threonine). The propeptide at 970 to 1002 (GSNIISAIAAVAVLLLGGCAVLIARKRKGGDIE) is removed by sortase.

It belongs to the glycosyl hydrolase 26 family. Homodimer.

The protein localises to the secreted. Its subcellular location is the cell wall. It carries out the reaction Random hydrolysis of (1-&gt;4)-beta-D-mannosidic linkages in mannans, galactomannans and glucomannans.. In terms of biological role, beta-mannanase likely involved in the utilization of carbohydrates in the human gut. Catalyzes the hydrolysis of different beta-1,4-linked mannans, such as ivory nut mannan, konjac glucomannan, as well as carob and guar gum galactomannans, to a mixture of oligosaccharides. The dominant product from ivory nut mannan is found to be mannotriose; mannobiose and mannotetraose are produced to a lesser extent. Does not hydrolyze mannobiose, and hydrolyzes mannotriose at a significantly lower rate than the longer oligosaccharides. This Bifidobacterium adolescentis (strain ATCC 15703 / DSM 20083 / NCTC 11814 / E194a) protein is Mannan endo-1,4-beta-mannosidase.